A 597-amino-acid polypeptide reads, in one-letter code: Aspartate--tRNA(Asp/Asn) ligase (597 aa).

Glu-175 is an L-aspartate binding site. Residues Gln-199–Lys-202 are aspartate. The L-aspartate site is built by Arg-221 and His-454. Position 221–223 (Arg-221–Glu-223) interacts with ATP. Glu-488 is an ATP binding site. Arg-495 lines the L-aspartate pocket. Gly-540–Arg-543 contacts ATP.

Belongs to the class-II aminoacyl-tRNA synthetase family. Type 1 subfamily. As to quaternary structure, homodimer.

Its subcellular location is the cytoplasm. It catalyses the reaction tRNA(Asx) + L-aspartate + ATP = L-aspartyl-tRNA(Asx) + AMP + diphosphate. In terms of biological role, aspartyl-tRNA synthetase with relaxed tRNA specificity since it is able to aspartylate not only its cognate tRNA(Asp) but also tRNA(Asn). Reaction proceeds in two steps: L-aspartate is first activated by ATP to form Asp-AMP and then transferred to the acceptor end of tRNA(Asp/Asn). This Bartonella tribocorum (strain CIP 105476 / IBS 506) protein is Aspartate--tRNA(Asp/Asn) ligase.